The primary structure comprises 123 residues: MEKKLPFSFKKKEKLTAYDDASIHELHKQLKLRTEAKKSKDKERTKEKEKHESLAKEKKPKLPFKKRIVNLWFGVDKEINKIVWVKGRQLIIIFLLILLVSGLMVGIFFGINQLLITLGIFKN.

Basic and acidic residues predominate over residues K31 to E57. Residues K31 to K58 form a disordered region. The chain crosses the membrane as a helical span at residues I91 to I111.

It localises to the membrane. This is an uncharacterized protein from Mycoplasma genitalium (strain ATCC 33530 / DSM 19775 / NCTC 10195 / G37) (Mycoplasmoides genitalium).